The sequence spans 576 residues: MWGRAVRRRCPRGLRRGREALLALLALAGLGALLRARSRSGTVDPGPPRTPLPGRHEPVLPRPPLPADALGAHGEAVRLQLQGEELRLQEESVKQHQINIYLSDRISLHRRLPERWNPLCREVKYDYDNLPKTSVVIAFYNEAWSTLLRTVYSVLETSPDILLEEVILVDDYSDREHLKERLANELSQLPKVRLIRASRREGLVRARLLGASAARGEVLTFLDCHCECHEGWLEPLLQRIHEKESAVVCPVIDVIDWNTFEYLGNSGEPQIGGFDWRLVFTWHVVPQRERQSMRSPIDVIRSPTMAGGLFAVSKRYFDYLGSYDTGMEVWGGENLEFSFRIWQCGGTLETHPCSHVGHVFPKQAPYSRSKALANSVRAAEVWMDEFKELYYHRNPQARLEPFGDVTERKKLRAKLQCKDFKWFLDTVYPELHVPEDRPGFFGMLQNRGLRGYCLDYNPPNENHVEGHQVLLYLCHGMGQNQFFEYTTRKEIRYNTRQPEACITVEDGKDTLVMDLCRETVPENQEFILQEDGTLVHKHSRKCVEATEKVLDNGFAPYLRDCTNSDNQRWFFKERMS.

Topologically, residues 1 to 19 are cytoplasmic; that stretch reads MWGRAVRRRCPRGLRRGRE. The chain crosses the membrane as a helical; Signal-anchor for type II membrane protein span at residues 20-37; sequence ALLALLALAGLGALLRAR. The segment at 38–58 is disordered; that stretch reads SRSGTVDPGPPRTPLPGRHEP. Over 38–576 the chain is Lumenal; that stretch reads SRSGTVDPGP…QRWFFKERMS (539 aa). 5 cysteine pairs are disulfide-bonded: Cys-120-Cys-353, Cys-344-Cys-417, Cys-453-Cys-474, Cys-501-Cys-516, and Cys-542-Cys-561. The interval 130-239 is catalytic subdomain A; sequence LPKTSVVIAF…EGWLEPLLQR (110 aa). Substrate is bound by residues Asp-171 and Arg-200. The Mn(2+) site is built by Asp-223 and His-225. Residues 299–361 form a catalytic subdomain B region; sequence VIRSPTMAGG…PCSHVGHVFP (63 aa). Trp-330 is a substrate binding site. Position 358 (His-358) interacts with Mn(2+). Residue Tyr-366 participates in substrate binding. A Ricin B-type lectin domain is found at 440-572; sequence FFGMLQNRGL…NSDNQRWFFK (133 aa).

The protein belongs to the glycosyltransferase 2 family. GalNAc-T subfamily. Mn(2+) serves as cofactor.

It localises to the golgi apparatus membrane. The catalysed reaction is L-seryl-[protein] + UDP-N-acetyl-alpha-D-galactosamine = a 3-O-[N-acetyl-alpha-D-galactosaminyl]-L-seryl-[protein] + UDP + H(+). It catalyses the reaction L-threonyl-[protein] + UDP-N-acetyl-alpha-D-galactosamine = a 3-O-[N-acetyl-alpha-D-galactosaminyl]-L-threonyl-[protein] + UDP + H(+). The protein operates within protein modification; protein glycosylation. Its function is as follows. Catalyzes the initial reaction in O-linked oligosaccharide biosynthesis, the transfer of an N-acetyl-D-galactosamine residue to a serine or threonine residue on the protein receptor. Has activity toward non-glycosylated peptides such as Muc5AC, Muc1a and EA2, and no detectable activity with Muc2 and Muc7. Displays enzymatic activity toward the Gal-NAc-Muc5AC glycopeptide, but no detectable activity to mono-GalNAc-glycosylated Muc1a, Muc2, Muc7 and EA2. May play an important role in the initial step of mucin-type oligosaccharide biosynthesis in digestive organs. This chain is Polypeptide N-acetylgalactosaminyltransferase 12 (Galnt12), found in Mus musculus (Mouse).